We begin with the raw amino-acid sequence, 225 residues long: MYSIKTDHKLMPRERLIRLGPEKLSNQELLAILLRTGNKEKHVLELSAYLLSSLDSLADLKKFSLQELQRLSGIGKVKAIEIKAMLELADRIQIAGQAVAAPVLSSAQVAEKMMIELGDKQQEHLVAIYLDSQNKIIEEKTIFIGTVRKSIAEPREILYYACKNMATSLIVVHNHPSGLTKPSANDYHFTEKIKRSCDYLGLICLDHIIVSKHGYYSFREKSDLF.

The 123-residue stretch at 102–224 (PVLSSAQVAE…YYSFREKSDL (123 aa)) folds into the MPN domain. Residues His-173, His-175, and Asp-186 each coordinate Zn(2+). A JAMM motif motif is present at residues 173–186 (HNHPSGLTKPSAND).

It belongs to the UPF0758 family.

The protein is UPF0758 protein Sez_1052 of Streptococcus equi subsp. zooepidemicus (strain MGCS10565).